We begin with the raw amino-acid sequence, 256 residues long: Imidazole glycerol phosphate synthase subunit HisF (256 aa).

Residues D11 and D130 contribute to the active site.

It belongs to the HisA/HisF family. As to quaternary structure, heterodimer of HisH and HisF.

Its subcellular location is the cytoplasm. It carries out the reaction 5-[(5-phospho-1-deoxy-D-ribulos-1-ylimino)methylamino]-1-(5-phospho-beta-D-ribosyl)imidazole-4-carboxamide + L-glutamine = D-erythro-1-(imidazol-4-yl)glycerol 3-phosphate + 5-amino-1-(5-phospho-beta-D-ribosyl)imidazole-4-carboxamide + L-glutamate + H(+). It participates in amino-acid biosynthesis; L-histidine biosynthesis; L-histidine from 5-phospho-alpha-D-ribose 1-diphosphate: step 5/9. Its function is as follows. IGPS catalyzes the conversion of PRFAR and glutamine to IGP, AICAR and glutamate. The HisF subunit catalyzes the cyclization activity that produces IGP and AICAR from PRFAR using the ammonia provided by the HisH subunit. The polypeptide is Imidazole glycerol phosphate synthase subunit HisF (Cupriavidus pinatubonensis (strain JMP 134 / LMG 1197) (Cupriavidus necator (strain JMP 134))).